The primary structure comprises 72 residues: Small, acid-soluble spore protein 1 (72 aa).

The protein belongs to the alpha/beta-type SASP family.

SASP are bound to spore DNA. They are double-stranded DNA-binding proteins that cause DNA to change to an a-like conformation. They protect the DNA backbone from chemical and enzymatic cleavage and are thus involved in dormant spore's high resistance to UV light. The polypeptide is Small, acid-soluble spore protein 1 (Sh-1) (Halobacillus halophilus (strain ATCC 35676 / DSM 2266 / JCM 20832 / KCTC 3685 / LMG 17431 / NBRC 102448 / NCIMB 2269) (Sporosarcina halophila)).